The following is a 108-amino-acid chain: Nucleoid-associated protein GK0018 (108 aa).

Positions M1–E32 are disordered. Residues M9–K18 are compositionally biased toward low complexity. The segment covering M19–E32 has biased composition (basic and acidic residues).

Belongs to the YbaB/EbfC family. Homodimer.

It is found in the cytoplasm. It localises to the nucleoid. Binds to DNA and alters its conformation. May be involved in regulation of gene expression, nucleoid organization and DNA protection. The protein is Nucleoid-associated protein GK0018 of Geobacillus kaustophilus (strain HTA426).